The primary structure comprises 134 residues: MSWQTYVDDHLMCDIEGHEGHRLTAAAIVGHDGSVWAQSATFPQFKPEEMNGIMTDFNEPGHLAPTGLHLGGTKYMVIQGEAGAVTRGKKGTGGITIKKTGQALVFGIYEEPVTPGQCNMVVGRLGDYLLEQGL.

Residues C13 and C118 are joined by a disulfide bond. The Involved in PIP2 interaction motif lies at 84 to 100 (AVTRGKKGTGGITIKKT). T114 is subject to Phosphothreonine.

It belongs to the profilin family. In terms of assembly, occurs in many kinds of cells as a complex with monomeric actin in a 1:1 ratio. Post-translationally, phosphorylated by MAP kinases.

It localises to the cytoplasm. The protein localises to the cytoskeleton. In terms of biological role, binds to actin and affects the structure of the cytoskeleton. At high concentrations, profilin prevents the polymerization of actin, whereas it enhances it at low concentrations. This is Profilin-2 from Olea europaea (Common olive).